We begin with the raw amino-acid sequence, 64 residues long: Large ribosomal subunit protein bL35 (64 aa).

The tract at residues 18–39 (GSGLVKHYPSNKHHKNTHKKEN) is disordered. The segment covering 26–39 (PSNKHHKNTHKKEN) has biased composition (basic residues).

Belongs to the bacterial ribosomal protein bL35 family.

The protein is Large ribosomal subunit protein bL35 of Symbiobacterium thermophilum (strain DSM 24528 / JCM 14929 / IAM 14863 / T).